We begin with the raw amino-acid sequence, 161 residues long: Regulator of ribonuclease activity A (161 aa).

Belongs to the RraA family. Homotrimer. Binds to both RNA-binding sites in the C-terminal region of Rne and to RhlB.

The protein localises to the cytoplasm. In terms of biological role, globally modulates RNA abundance by binding to RNase E (Rne) and regulating its endonucleolytic activity. Can modulate Rne action in a substrate-dependent manner by altering the composition of the degradosome. Modulates RNA-binding and helicase activities of the degradosome. The protein is Regulator of ribonuclease activity A of Klebsiella pneumoniae (strain 342).